Reading from the N-terminus, the 561-residue chain is Long-chain-fatty-acid--CoA ligase (561 aa).

Position 213-224 (213-224) interacts with ATP; it reads YTGGTTGVAKGA.

Belongs to the ATP-dependent AMP-binding enzyme family. Mg(2+) is required as a cofactor.

The protein resides in the membrane. It carries out the reaction a long-chain fatty acid + ATP + CoA = a long-chain fatty acyl-CoA + AMP + diphosphate. It functions in the pathway lipid metabolism; fatty acid beta-oxidation. Its function is as follows. Catalyzes the esterification, concomitant with transport, of exogenous long-chain fatty acids into metabolically active CoA thioesters for subsequent degradation or incorporation into phospholipids. The protein is Long-chain-fatty-acid--CoA ligase (fadD) of Salmonella typhi.